We begin with the raw amino-acid sequence, 142 residues long: Large ribosomal subunit protein uL11 (142 aa).

This sequence belongs to the universal ribosomal protein uL11 family. As to quaternary structure, part of the ribosomal stalk of the 50S ribosomal subunit. Interacts with L10 and the large rRNA to form the base of the stalk. L10 forms an elongated spine to which L12 dimers bind in a sequential fashion forming a multimeric L10(L12)X complex. Post-translationally, one or more lysine residues are methylated.

In terms of biological role, forms part of the ribosomal stalk which helps the ribosome interact with GTP-bound translation factors. This Acinetobacter baylyi (strain ATCC 33305 / BD413 / ADP1) protein is Large ribosomal subunit protein uL11.